A 480-amino-acid polypeptide reads, in one-letter code: Glutamate--tRNA ligase (480 aa).

The 'HIGH' region signature appears at 21–31; that stretch reads PSPTGYLHVGG. Zn(2+)-binding residues include cysteine 110, cysteine 112, cysteine 137, and histidine 139. The 'KMSKS' region motif lies at 248–252; it reads KLSKR. ATP is bound at residue lysine 251.

It belongs to the class-I aminoacyl-tRNA synthetase family. Glutamate--tRNA ligase type 1 subfamily. Monomer. Zn(2+) is required as a cofactor.

The protein localises to the cytoplasm. It carries out the reaction tRNA(Glu) + L-glutamate + ATP = L-glutamyl-tRNA(Glu) + AMP + diphosphate. In terms of biological role, catalyzes the attachment of glutamate to tRNA(Glu) in a two-step reaction: glutamate is first activated by ATP to form Glu-AMP and then transferred to the acceptor end of tRNA(Glu). The chain is Glutamate--tRNA ligase from Histophilus somni (strain 2336) (Haemophilus somnus).